The chain runs to 131 residues: Fumarate reductase subunit C (131 aa).

3 consecutive transmembrane segments (helical) span residues 30 to 50, 57 to 77, and 109 to 129; these read EGTA…LFAL, WMGF…LITL, and IIKG…YVAL.

Belongs to the FrdC family. In terms of assembly, part of an enzyme complex containing four subunits: a flavoprotein (FrdA), an iron-sulfur protein (FrdB), and two hydrophobic anchor proteins (FrdC and FrdD).

Its subcellular location is the cell inner membrane. Its function is as follows. Two distinct, membrane-bound, FAD-containing enzymes are responsible for the catalysis of fumarate and succinate interconversion; fumarate reductase is used in anaerobic growth, and succinate dehydrogenase is used in aerobic growth. Anchors the catalytic components of the fumarate reductase complex to the cell inner membrane, binds quinones. The polypeptide is Fumarate reductase subunit C (Salmonella heidelberg (strain SL476)).